We begin with the raw amino-acid sequence, 395 residues long: Elongation factor Tu (395 aa).

The tr-type G domain maps to 10–204; it reads KPHCNIGTIG…TVDSYIPDPQ (195 aa). Positions 19 to 26 are G1; that stretch reads GHVDHGKT. 19 to 26 is a binding site for GTP; sequence GHVDHGKT. Thr-26 is a Mg(2+) binding site. The G2 stretch occupies residues 61–65; the sequence is GITIS. The G3 stretch occupies residues 82-85; sequence DCPG. GTP is bound by residues 82–86 and 137–140; these read DCPGH and NKCD. The segment at 137–140 is G4; that stretch reads NKCD. A G5 region spans residues 173–175; that stretch reads SAL.

The protein belongs to the TRAFAC class translation factor GTPase superfamily. Classic translation factor GTPase family. EF-Tu/EF-1A subfamily. As to quaternary structure, monomer.

It is found in the cytoplasm. It carries out the reaction GTP + H2O = GDP + phosphate + H(+). In terms of biological role, GTP hydrolase that promotes the GTP-dependent binding of aminoacyl-tRNA to the A-site of ribosomes during protein biosynthesis. This Agathobacter rectalis (strain ATCC 33656 / DSM 3377 / JCM 17463 / KCTC 5835 / VPI 0990) (Eubacterium rectale) protein is Elongation factor Tu.